The following is a 68-amino-acid chain: Protease A inhibitor 3 (68 aa).

At Met1 the chain carries N-acetylmethionine. The segment covering 1–14 has biased composition (polar residues); that stretch reads MNTDQQKVSEIFQS. Disordered regions lie at residues 1 to 21 and 33 to 68; these read MNTD…KLQG and MASQ…HKKE. The tract at residues 1-32 is inhibitory domain; it reads MNTDQQKVSEIFQSSKEKLQGDAKVVSDAFKK. A compositionally biased stretch (basic and acidic residues) spans 33–53; sequence MASQDKDGKTTDADESEKHNY.

This sequence belongs to the protease inhibitor I34 family.

Its function is as follows. Specific and potent inhibitor for yeast aspartic protease A (yscA). The proteinase acts as a folding template stabilizing the helical conformation in the inhibitor, which results in the potent and specific blockage of the proteolytic activity. The polypeptide is Protease A inhibitor 3 (PAI3) (Saccharomyces cerevisiae (strain ATCC 204508 / S288c) (Baker's yeast)).